Consider the following 577-residue polypeptide: Probable cytochrome c biosynthesis protein (577 aa).

This sequence belongs to the CcmF/CycK/Ccl1/NrfE/CcsA family.

The protein resides in the mitochondrion. Its function is as follows. Could be involved in assembly and maturation of cytochromes c. May play a role in guidance of apocytochromes and heme groups for the covalent linkage introduced by the cytochrome-c-heme lyase. This chain is Probable cytochrome c biosynthesis protein, found in Oenothera berteroana (Bertero's evening primrose).